Consider the following 205-residue polypeptide: Heme ligase (205 aa).

Positions 48–203 (KRTIINLIYS…GVVHIVDKPI (156 aa)) constitute an FAS1 domain. The required for binding to host hemoglobin stretch occupies residues 154 to 172 (LRNLLNNDLIVKIEGEFKH). 2 heme binding domain regions span residues 171–181 (KHCNHSIYLNG) and 191–200 (CHNGVVHIVD).

Component of the hemozoin formation complex (HFC) composed of falcipains FP2A and/or FP2B, plasmepsins PMII, PMIII/HAP and PMIV, heme detoxifying protein HDP and falcilysin FLN. The HFC complex is involved in hemoglobin degradation and detoxification of heme in the food vacuole during the asexual blood stage. Interacts with falcipain 2; the interaction is direct and enhances HDP catalytic activity. Interacts with host hemoglobin.

The protein resides in the vacuole. The protein localises to the host cytoplasm. Its subcellular location is the host cytosol. The catalysed reaction is 2 Fe(III)-heme b = beta-hematin. In terms of biological role, heme detoxifying enzyme that converts heme to crystalline hemozoin (beta-hematin) to protect the organism from the toxic effects of heme. During its development, P.falciparum proteolyzes vast amounts of host hemoglobin, leading to heme release. The polypeptide is Heme ligase (Plasmodium falciparum (isolate 3D7)).